The primary structure comprises 364 residues: DNA replication and repair protein RecF (364 aa).

G30–T37 serves as a coordination point for ATP.

Belongs to the RecF family.

Its subcellular location is the cytoplasm. In terms of biological role, the RecF protein is involved in DNA metabolism; it is required for DNA replication and normal SOS inducibility. RecF binds preferentially to single-stranded, linear DNA. It also seems to bind ATP. The polypeptide is DNA replication and repair protein RecF (Porphyromonas gingivalis (strain ATCC BAA-308 / W83)).